Here is a 316-residue protein sequence, read N- to C-terminus: Protein lifeguard 2 (316 aa).

The tract at residues 1-53 (MTQGKLSVANKAPGTEGQQQVHGEKKEAPAVPSAPPSYEEATSGEGMKAGAFP) is disordered. 3 helical membrane-spanning segments follow: residues 106-126 (VYTI…LFTF), 138-158 (PGWY…LACC), and 165-185 (FPWN…LTGM). N-linked (GlcNAc...) asparagine glycosylation is present at asparagine 191. 4 consecutive transmembrane segments (helical) span residues 194–214 (SVLL…VFSF), 225–245 (GVLF…AILL), 250–270 (VPWL…LFLA), and 290–310 (IFGA…FLQL).

Belongs to the BI1 family. LFG subfamily. Interacts with FAS/TNFRSF6 and BAX. Highly expressed in breast carcinoma tissues. Enhanced expression correlates with the grade of the tumor (grade II/grade III) in primary breast tumors (at protein level). Widely expressed. Expressed at high levels in the brain especially in the hippocampus.

Its subcellular location is the cell membrane. It localises to the membrane raft. It is found in the postsynaptic cell membrane. In terms of biological role, antiapoptotic protein which protects cells uniquely from Fas-induced apoptosis. Regulates Fas-mediated apoptosis in neurons by interfering with caspase-8 activation. May play a role in cerebellar development by affecting cerebellar size, internal granular layer (IGL) thickness, and Purkinje cell (PC) development. This Homo sapiens (Human) protein is Protein lifeguard 2 (FAIM2).